The following is a 310-amino-acid chain: tRNA dimethylallyltransferase (310 aa).

14 to 21 provides a ligand contact to ATP; it reads GPTASGKS. 16–21 is a binding site for substrate; that stretch reads TASGKS. 2 interaction with substrate tRNA regions span residues 39–42 and 163–167; these read DSMQ and QRIVR.

It belongs to the IPP transferase family. Monomer. Requires Mg(2+) as cofactor.

The enzyme catalyses adenosine(37) in tRNA + dimethylallyl diphosphate = N(6)-dimethylallyladenosine(37) in tRNA + diphosphate. Catalyzes the transfer of a dimethylallyl group onto the adenine at position 37 in tRNAs that read codons beginning with uridine, leading to the formation of N6-(dimethylallyl)adenosine (i(6)A). The sequence is that of tRNA dimethylallyltransferase from Brucella melitensis biotype 2 (strain ATCC 23457).